A 373-amino-acid chain; its full sequence is Phosphoserine aminotransferase (373 aa).

R41 contacts L-glutamate. Pyridoxal 5'-phosphate is bound by residues 75–76, W101, T152, D172, and Q195; that span reads GT. K196 is modified (N6-(pyridoxal phosphate)lysine). 236-237 lines the pyridoxal 5'-phosphate pocket; it reads NT.

This sequence belongs to the class-V pyridoxal-phosphate-dependent aminotransferase family. SerC subfamily. In terms of assembly, homodimer. The cofactor is pyridoxal 5'-phosphate.

The protein resides in the cytoplasm. The enzyme catalyses O-phospho-L-serine + 2-oxoglutarate = 3-phosphooxypyruvate + L-glutamate. It carries out the reaction 4-(phosphooxy)-L-threonine + 2-oxoglutarate = (R)-3-hydroxy-2-oxo-4-phosphooxybutanoate + L-glutamate. It participates in amino-acid biosynthesis; L-serine biosynthesis; L-serine from 3-phospho-D-glycerate: step 2/3. Catalyzes the reversible conversion of 3-phosphohydroxypyruvate to phosphoserine and of 3-hydroxy-2-oxo-4-phosphonooxybutanoate to phosphohydroxythreonine. The polypeptide is Phosphoserine aminotransferase (Lactobacillus helveticus (strain DPC 4571)).